A 525-amino-acid polypeptide reads, in one-letter code: Vesicular inhibitory amino acid transporter (525 aa).

Topologically, residues 1–132 are cytoplasmic; sequence MATLLRSKLT…WNVTNAIQGM (132 aa). A helical membrane pass occupies residues 133-153; that stretch reads FVLGLPYAILHGGYLGLFLII. Residues 154–204 are Lumenal, vesicle-facing; sequence FAAVVCCYTGKILIACLYEENEDGEVVRVRDSYVAIANACCAPRFPTLGGR. Y186 bears the 3'-nitrotyrosine mark. The helical transmembrane segment at 205–225 threads the bilayer; the sequence is VVNVAQIIELVMTCILYVVVS. The Cytoplasmic portion of the chain corresponds to 226–265; the sequence is GNLMYNSFPGLPVSQKSWSIIATAVLLPCAFLKNLKAVSK. A helical membrane pass occupies residues 266 to 286; it reads FSLLCTLAHFVINILVIAYCL. Over 287-305 the chain is Lumenal, vesicle; that stretch reads SRARDWAWEKVKFYIDVKK. Residues 306 to 326 traverse the membrane as a helical segment; that stretch reads FPISIGIIVFSYTSQIFLPSL. Over 327–341 the chain is Cytoplasmic; sequence EGNMQQPSEFHCMMN. Residues 342-362 traverse the membrane as a helical segment; it reads WTHIAACVLKGLFALVAYLTW. Residues 363–383 are Lumenal, vesicle-facing; the sequence is ADETKEVITDNLPGSIRAVVN. Residues 384 to 404 form a helical membrane-spanning segment; the sequence is IFLVAKALLSYPLPFFAAVEV. The Cytoplasmic segment spans residues 405–438; the sequence is LEKSLFQEGSRAFFPACYGGDGRLKSWGLTLRCA. The helical transmembrane segment at 439-459 threads the bilayer; it reads LVVFTLLMAIYVPHFALLMGL. Topologically, residues 460–461 are lumenal, vesicle; sequence TG. Residues 462 to 482 form a helical membrane-spanning segment; that stretch reads SLTGAGLCFLLPSLFHLRLLW. Residues 483-489 are Cytoplasmic-facing; the sequence is RKLLWHQ. The helical transmembrane segment at 490-510 threads the bilayer; that stretch reads VFFDVAIFVIGGICSVSGFVH. At 511–525 the chain is on the lumenal, vesicle side; the sequence is SLEGLIEAYRTNAED.

Belongs to the amino acid/polyamine transporter 2 family. As to expression, brain. Expressed at high levels within the neocortex, hippocampus, cerebellum, striatum, septal nuclei and the reticular nucleus of the thalamus. Also expressed in islets where it is more abundant in the peripheral/mantle region. Highly expressed in the nerve endings of GABA neurons in the brain and spinal cord but also in glycinergic nerve endings. Expressed in glycine-, GABA- or GABA- and glycine-containing boutons.

The protein resides in the cytoplasmic vesicle. Its subcellular location is the secretory vesicle. The protein localises to the synaptic vesicle membrane. It is found in the presynapse. It carries out the reaction beta-alanine(out) + n H(+)(in) = beta-alanine(in) + n H(+)(out). The enzyme catalyses 4-aminobutanoate(out) + n H(+)(in) = 4-aminobutanoate(in) + n H(+)(out). It catalyses the reaction glycine(out) + n H(+)(in) = glycine(in) + n H(+)(out). Its function is as follows. Antiporter that exchanges vesicular protons for cytosolic 4-aminobutanoate or to a lesser extend glycine, thus allowing their secretion from nerve terminals. The transport is equally dependent on the chemical and electrical components of the proton gradient. May also transport beta-alanine. Acidification of GABAergic synaptic vesicles is a prerequisite for 4-aminobutanoate uptake. The chain is Vesicular inhibitory amino acid transporter from Rattus norvegicus (Rat).